Consider the following 356-residue polypeptide: MFS-type transporter tazK (356 aa).

9 consecutive transmembrane segments (helical) span residues 12-32 (LPFF…ALGH), 42-62 (FLGG…LADF), 69-89 (GVAV…GAIT), 102-122 (MTAW…FIIL), 178-198 (ILLS…LLFV), 211-231 (GAID…VGAF), 257-277 (LHPM…FAWT), 288-308 (ILAG…SLAY), and 320-340 (AISG…LFAP).

This sequence belongs to the major facilitator superfamily. CAR1 family.

Its subcellular location is the membrane. Its function is as follows. MFS-type transporter; part of the gene cluster that mediates the biosynthesis of azaterrilone A and other azaphilones, a class of fungal metabolites characterized by a highly oxygenated pyrano-quinone bicyclic core and exhibiting a broad range of bioactivities. This Aspergillus terreus (strain NIH 2624 / FGSC A1156) protein is MFS-type transporter tazK.